We begin with the raw amino-acid sequence, 206 residues long: Large ribosomal subunit protein uL4 (206 aa).

A disordered region spans residues 44 to 78; the sequence is RSGNRAQKDREQVKHTTKKPWRQKGTGRARAGMSS. The span at 58–70 shows a compositional bias: basic residues; the sequence is HTTKKPWRQKGTG.

It belongs to the universal ribosomal protein uL4 family. Part of the 50S ribosomal subunit.

Functionally, one of the primary rRNA binding proteins, this protein initially binds near the 5'-end of the 23S rRNA. It is important during the early stages of 50S assembly. It makes multiple contacts with different domains of the 23S rRNA in the assembled 50S subunit and ribosome. In terms of biological role, forms part of the polypeptide exit tunnel. The sequence is that of Large ribosomal subunit protein uL4 from Paraburkholderia phytofirmans (strain DSM 17436 / LMG 22146 / PsJN) (Burkholderia phytofirmans).